Here is a 317-residue protein sequence, read N- to C-terminus: L-lactate dehydrogenase 1 (317 aa).

Residues Val17, Asp38, Lys43, Tyr69, and 83 to 84 (GA) each bind NAD(+). 2 residues coordinate substrate: Gln86 and Arg92. Residues Ser105, 122–124 (ATN), and Ser147 contribute to the NAD(+) site. Position 124–127 (124–127 (NPVD)) interacts with substrate. A substrate-binding site is contributed by 152 to 155 (DSAR). Catalysis depends on His179, which acts as the Proton acceptor. Tyr223 is subject to Phosphotyrosine. Thr232 is a substrate binding site.

This sequence belongs to the LDH/MDH superfamily. LDH family. Homotetramer.

The protein resides in the cytoplasm. It carries out the reaction (S)-lactate + NAD(+) = pyruvate + NADH + H(+). It participates in fermentation; pyruvate fermentation to lactate; (S)-lactate from pyruvate: step 1/1. In terms of biological role, catalyzes the conversion of lactate to pyruvate (Potential). Appears to be the primary factor that allows S.aureus growth during nitrosative stress in both aerobically and anaerobically cultured cells. This chain is L-lactate dehydrogenase 1, found in Staphylococcus aureus (strain bovine RF122 / ET3-1).